The following is an 838-amino-acid chain: Protein translocase subunit SecA (838 aa).

ATP contacts are provided by residues Gln87, 105-109, and Asp494; that span reads GEGKT. 2 stretches are compositionally biased toward basic and acidic residues: residues 781–790 and 803–819; these read EQEFQHKDET and EDAK…KVGR. The segment at 781-838 is disordered; it reads EQEFQHKDETANVQYSGPAESAEDAKKEPKRREAPKVGRNDPCPCGSGKKYKKCHGAK. Zn(2+) contacts are provided by Cys823, Cys825, Cys834, and His835. Basic residues predominate over residues 829–838; the sequence is KKYKKCHGAK.

Belongs to the SecA family. In terms of assembly, monomer and homodimer. Part of the essential Sec protein translocation apparatus which comprises SecA, SecYEG and auxiliary proteins SecDF-YajC and YidC. Zn(2+) is required as a cofactor.

The protein localises to the cell inner membrane. It is found in the cytoplasm. It carries out the reaction ATP + H2O + cellular proteinSide 1 = ADP + phosphate + cellular proteinSide 2.. Part of the Sec protein translocase complex. Interacts with the SecYEG preprotein conducting channel. Has a central role in coupling the hydrolysis of ATP to the transfer of proteins into and across the cell membrane, serving as an ATP-driven molecular motor driving the stepwise translocation of polypeptide chains across the membrane. The protein is Protein translocase subunit SecA of Solidesulfovibrio magneticus (strain ATCC 700980 / DSM 13731 / RS-1) (Desulfovibrio magneticus).